A 433-amino-acid chain; its full sequence is Monodehydroascorbate reductase (433 aa).

Residues 12 to 15 (GGVS), E39, R46, K51, I94, and 145 to 146 (RE) each bind FAD. Residues 170-176 (GGYIGLE), E194, R200, and G259 each bind NAD(+). 172-176 (YIGLE) contacts NADP(+). The NADP(+) site is built by R200 and G259. D296 lines the FAD pocket. 312-313 (EH) is a binding site for NAD(+). 312–313 (EH) provides a ligand contact to NADP(+). Residue V314 coordinates FAD. R318 contributes to the L-ascorbate binding site. Y347 provides a ligand contact to FAD. Y347 serves as a coordination point for NAD(+). Y347 contributes to the NADP(+) binding site. Residue R349 coordinates L-ascorbate.

Belongs to the FAD-dependent oxidoreductase family. FAD serves as cofactor. In terms of tissue distribution, expressed at relatively low levels in all tissues examined.

It localises to the cytoplasm. It carries out the reaction 2 monodehydro-L-ascorbate radical + NADH + H(+) = 2 L-ascorbate + NAD(+). Catalyzes the conversion of monodehydroascorbate to ascorbate, oxidizing NADH in the process. The sequence is that of Monodehydroascorbate reductase from Pisum sativum (Garden pea).